A 291-amino-acid chain; its full sequence is MAEIKAAQVMQLRKKSGAGIMDAKKALVASDGDMDKAMDYLREKGIAKAAKKSDRVAAEGLADIAVNGNTAAIVELNSETDFVAASEPFKDLLKKVTKLISENKPANVEEALEIKTENGTLNDDIISTTQKTGEKVSLRRFTVVEKDDGDSFGAYLHQGGQIAALVVLEGADDATAKDVAMHVAAINPEFMTRDDVSQERLDHERAIFKEETLNEGKPEKIVDKIVEGRLNKFLSQICLADQDFVKDSDQTVEQYVSSKNGKLKSFIRYEVGEGIEKKQDDFAQEVKDQMN.

Positions 80-83 are involved in Mg(2+) ion dislocation from EF-Tu; that stretch reads TDFV.

The protein belongs to the EF-Ts family.

Its subcellular location is the cytoplasm. Associates with the EF-Tu.GDP complex and induces the exchange of GDP to GTP. It remains bound to the aminoacyl-tRNA.EF-Tu.GTP complex up to the GTP hydrolysis stage on the ribosome. This chain is Elongation factor Ts, found in Limosilactobacillus reuteri (strain DSM 20016) (Lactobacillus reuteri).